A 1072-amino-acid polypeptide reads, in one-letter code: MLRDGNEGMFTIPGFSQIQFEGFCRFINQGLMEEFNKFPKIEDTDQEIEFKLFVETYQLAEPLIKERDAVYESLTYSSELYVLAGLIWKTNRDMKEQTVFIGNIPLMNSLGTFIVNGIYRIVINQILQSPGIYYRSELDHNGISVYTSTIISDWGGRSELEIDRKARIWARVSRKQKISILVLLSAMGLNLREILDNVCYPEIFLSFLNDKEKKKIGSKENAILEFYQQFACVGGDPVFSESLCKELQKKFFQQRCELGRIGRRNINQRLNLDIPHNNTFLLPRDVLAAADHLIGMKFGMGTLDDMNHLKNKRIRSVADLLQDQFGLALVRLENAVRGTISGAIRHKLIPTPQNLVTSTSLTTTYESFFGLHPLSQVLDRTNPLTQIVHGRKLSYLGPGGVTGRTASFRIRDIHPSHYGRICPIDTSEGINVGLIGSLAIHVRIGHWGSIETPFYEISERSKEKEARMIYLSPSRDEYYMIAAGNSLALNRGIQEEQVVPARYRQEFLTIAWEQVHLRSIFPFQYFSIGASLIPFIEHNDANRALMSSNMQRQAVPLSRSEKCIVGTGLERQAALDSGVSVIAEHEGKVISTDTHQIVFSGNGNTLNIPLVMYQRSNKNTCMHQKPQVQRGKYVKKGQILADGAATVGGELALGKNVLVAYMPWEGYNFEDAVLISERLVYSDIYTSFHIRKYEIQTHMTSQGPERITNEIPHLEAHLLRNLDRNGIVMLGSWVETGDILVGKLTPQIANESSYAPEDRLLRAILGIQVSTAKETSLKLPIGGRGRVIDVRWIQKKGGSSYNPEIIRVYILQKREIKVGDKVAGRHGNKGIISKILPRQDMPYLQDGTPVDMVFNPLGVPSRMNVGQIFECSLGLAGDLLNRHYRIAPFDERYEQEASRKLVFSELYEASKQTKNPWVFEPEYPGKSKIFDGRTGDPFEQAVLIGKSYILKLIHQVDDKIHGRSSGHYALVTQQPLRGRAKQGGQRVGEMEVWALEGFGVAHILQEMLTYKSDHIRARQEVLGTTIIGGTIVNPEDAPESFRLLVRELRSLALELNHFLVSEKNFQINRKEA.

The protein belongs to the RNA polymerase beta chain family. In plastids the minimal PEP RNA polymerase catalytic core is composed of four subunits: alpha, beta, beta', and beta''. When a (nuclear-encoded) sigma factor is associated with the core the holoenzyme is formed, which can initiate transcription.

It is found in the plastid. The protein localises to the chloroplast. The enzyme catalyses RNA(n) + a ribonucleoside 5'-triphosphate = RNA(n+1) + diphosphate. Its function is as follows. DNA-dependent RNA polymerase catalyzes the transcription of DNA into RNA using the four ribonucleoside triphosphates as substrates. The chain is DNA-directed RNA polymerase subunit beta from Lemna minor (Common duckweed).